A 46-amino-acid chain; its full sequence is Spectrin alpha chain, non-erythrocytic 1 (46 aa).

Spectrin repeat units lie at residues A1–D5, F7–R14, S15–S20, A21–R26, L27–K35, and D39–K46.

This sequence belongs to the spectrin family. As to quaternary structure, associates with the gamma-tubulin complex in brain, but not in kidney, liver, sperm, or uterus. Like erythrocyte spectrin, the spectrin-like proteins are capable of forming dimers which can further associate to tetramers. Interacts with isoform 1 of ACP1. Interacts with CALM and EMD. Interacts (via C-terminal spectrin repeats) with TRPC4. Identified in a complex with ACTN4, CASK, IQGAP1, MAGI2, NPHS1 and SPTBN1. Interacts with CLN3; this interaction regulates the fodrin localization at the plasma membrane.

It is found in the cytoplasm. It localises to the cytoskeleton. The protein localises to the cell cortex. In terms of biological role, fodrin, which seems to be involved in secretion, interacts with calmodulin in a calcium-dependent manner and is thus candidate for the calcium-dependent movement of the cytoskeleton at the membrane. This is Spectrin alpha chain, non-erythrocytic 1 (SPTAN1) from Capra hircus (Goat).